The following is a 347-amino-acid chain: Ornithine carbamoyltransferase (347 aa).

Carbamoyl phosphate contacts are provided by residues 56-59, Q83, R107, and 134-137; these read STRT and HPTQ. Residues N168, D232, and 236–237 each bind L-ornithine; that span reads SM. Carbamoyl phosphate contacts are provided by residues 274–275 and R320; that span reads CL.

It belongs to the aspartate/ornithine carbamoyltransferase superfamily. OTCase family.

Its subcellular location is the cytoplasm. It catalyses the reaction carbamoyl phosphate + L-ornithine = L-citrulline + phosphate + H(+). In terms of biological role, reversibly catalyzes the transfer of the carbamoyl group from carbamoyl phosphate (CP) to the N(epsilon) atom of ornithine (ORN) to produce L-citrulline. This is Ornithine carbamoyltransferase from Blochmanniella floridana.